A 204-amino-acid chain; its full sequence is Ribonuclease HII (204 aa).

Positions Met1 to Leu197 constitute an RNase H type-2 domain. Residues Asp6, Glu7, and Asp103 each contribute to the a divalent metal cation site.

Belongs to the RNase HII family. It depends on Mn(2+) as a cofactor. Mg(2+) serves as cofactor.

The protein resides in the cytoplasm. It catalyses the reaction Endonucleolytic cleavage to 5'-phosphomonoester.. Endonuclease that specifically degrades the RNA of RNA-DNA hybrids. In Helicobacter pylori (strain Shi470), this protein is Ribonuclease HII.